Here is a 778-residue protein sequence, read N- to C-terminus: Ribosome biogenesis protein BOP1 homolog (778 aa).

Over residues 1 to 10 (MAKKQDRKRK) the composition is skewed to basic residues. The tract at residues 1-152 (MAKKQDRKRK…DSDTSDEEDI (152 aa)) is disordered. Composition is skewed to acidic residues over residues 44–53 (EDSTDDEGID), 60–72 (SSED…DEEG), and 84–105 (SSDE…DEEE). Positions 114–124 (TTSSKAETNNE) are enriched in polar residues. The segment covering 142–151 (EDSDTSDEED) has biased composition (acidic residues). WD repeat units lie at residues 438-479 (GHTD…RTIE), 481-519 (EDVV…KLLI), 564-606 (NHFK…SQIP), 609-647 (KSKG…LIKK), 650-689 (TNSK…KPYQ), 693-732 (LHRN…DLLQ), and 748-778 (RDDF…RLYT).

This sequence belongs to the WD repeat BOP1/ERB1 family.

The protein localises to the nucleus. Its subcellular location is the nucleolus. The protein resides in the nucleoplasm. Functionally, required for maturation of ribosomal RNAs and formation of the large ribosomal subunit. In Drosophila willistoni (Fruit fly), this protein is Ribosome biogenesis protein BOP1 homolog.